The chain runs to 1157 residues: DNA-directed RNA polymerase subunit beta (1157 aa).

It belongs to the RNA polymerase beta chain family. The RNAP catalytic core consists of 2 alpha, 1 beta, 1 beta' and 1 omega subunit. When a sigma factor is associated with the core the holoenzyme is formed, which can initiate transcription.

It carries out the reaction RNA(n) + a ribonucleoside 5'-triphosphate = RNA(n+1) + diphosphate. Its function is as follows. DNA-dependent RNA polymerase catalyzes the transcription of DNA into RNA using the four ribonucleoside triphosphates as substrates. This Tropheryma whipplei (strain Twist) (Whipple's bacillus) protein is DNA-directed RNA polymerase subunit beta.